The chain runs to 306 residues: Large ribosomal subunit protein uL2m (306 aa).

The transit peptide at 1-60 (MALCALTSALRSLSLASAAITARVPTLLPAAQIQSNVLLQLPPALVSPSYRPVHMSADRS) directs the protein to the mitochondrion.

Belongs to the universal ribosomal protein uL2 family. Component of the mitochondrial ribosome large subunit (39S) which comprises a 16S rRNA and about 50 distinct proteins.

It is found in the mitochondrion. The chain is Large ribosomal subunit protein uL2m (Mrpl2) from Mus musculus (Mouse).